The primary structure comprises 160 residues: Protein D14 (160 aa).

The protein is Protein D14 (D14) of Escherichia phage T5 (Enterobacteria phage T5).